Consider the following 386-residue polypeptide: Probable family 17 glucosidase SCW4 (386 aa).

Residues 1–19 (MRLSNLIASASLLSAATLA) form the signal peptide. The propeptide occupies 20 to 30 (APANHEHKDKR). The tract at residues 88–127 (ENNSQVSAAASPASSSAATSTQSSSSSQASSSSSSGEDVS) is disordered. A glycan (N-linked (GlcNAc...) asparagine) is linked at Asn-89. Glu-323 functions as the Nucleophile in the catalytic mechanism.

Belongs to the glycosyl hydrolase 17 family. Post-translationally, N-glycosylated.

It is found in the secreted. The protein resides in the cell wall. Its function is as follows. Glucanases possibly play a role in cell expansion during growth, in cell-cell fusion during mating, and in spore release during sporulation. The sequence is that of Probable family 17 glucosidase SCW4 (SCW4) from Saccharomyces cerevisiae (strain ATCC 204508 / S288c) (Baker's yeast).